A 126-amino-acid chain; its full sequence is Large ribosomal subunit protein bL17 (126 aa).

This sequence belongs to the bacterial ribosomal protein bL17 family. In terms of assembly, part of the 50S ribosomal subunit. Contacts protein L32.

The sequence is that of Large ribosomal subunit protein bL17 from Coxiella burnetii (strain CbuG_Q212) (Coxiella burnetii (strain Q212)).